Here is a 508-residue protein sequence, read N- to C-terminus: Drug efflux pump JefA (508 aa).

The next 14 helical transmembrane spans lie at 9–29 (VLAT…VNVA), 46–66 (WAVA…ALLG), 75–95 (FVFG…PVSL), 104–124 (IQGL…SHSF), 136–156 (NWMA…GLMV), 163–183 (SVFL…LVGV), 194–214 (LDWV…YTII), 222–242 (QSAG…WLFV), 265–285 (SVLI…MVIT), 297–317 (LHAG…SLLA), 328–348 (LPVL…AISM), 354–374 (VALV…TPLL), 399–419 (LGGI…LGAA), and 479–499 (GIKL…VLGW).

Belongs to the major facilitator superfamily.

It localises to the cell inner membrane. In terms of biological role, involved in resistance to ethambutol and isoniazid. The polypeptide is Drug efflux pump JefA (Mycobacterium tuberculosis (strain CDC 1551 / Oshkosh)).